The chain runs to 177 residues: ATP synthase subunit delta (177 aa).

The protein belongs to the ATPase delta chain family. As to quaternary structure, F-type ATPases have 2 components, F(1) - the catalytic core - and F(0) - the membrane proton channel. F(1) has five subunits: alpha(3), beta(3), gamma(1), delta(1), epsilon(1). F(0) has three main subunits: a(1), b(2) and c(10-14). The alpha and beta chains form an alternating ring which encloses part of the gamma chain. F(1) is attached to F(0) by a central stalk formed by the gamma and epsilon chains, while a peripheral stalk is formed by the delta and b chains.

The protein localises to the cell inner membrane. In terms of biological role, f(1)F(0) ATP synthase produces ATP from ADP in the presence of a proton or sodium gradient. F-type ATPases consist of two structural domains, F(1) containing the extramembraneous catalytic core and F(0) containing the membrane proton channel, linked together by a central stalk and a peripheral stalk. During catalysis, ATP synthesis in the catalytic domain of F(1) is coupled via a rotary mechanism of the central stalk subunits to proton translocation. This protein is part of the stalk that links CF(0) to CF(1). It either transmits conformational changes from CF(0) to CF(1) or is implicated in proton conduction. This chain is ATP synthase subunit delta, found in Serratia proteamaculans (strain 568).